The chain runs to 433 residues: Enolase (433 aa).

A (2R)-2-phosphoglycerate-binding site is contributed by Gln167. The Proton donor role is filled by Glu209. 3 residues coordinate Mg(2+): Asp246, Glu291, and Asp318. 4 residues coordinate (2R)-2-phosphoglycerate: Lys343, Arg372, Ser373, and Lys394. Catalysis depends on Lys343, which acts as the Proton acceptor.

Belongs to the enolase family. In terms of assembly, component of the RNA degradosome, a multiprotein complex involved in RNA processing and mRNA degradation. Mg(2+) serves as cofactor.

It localises to the cytoplasm. The protein resides in the secreted. The protein localises to the cell surface. It catalyses the reaction (2R)-2-phosphoglycerate = phosphoenolpyruvate + H2O. It functions in the pathway carbohydrate degradation; glycolysis; pyruvate from D-glyceraldehyde 3-phosphate: step 4/5. Its function is as follows. Catalyzes the reversible conversion of 2-phosphoglycerate (2-PG) into phosphoenolpyruvate (PEP). It is essential for the degradation of carbohydrates via glycolysis. The sequence is that of Enolase from Shewanella frigidimarina (strain NCIMB 400).